The chain runs to 115 residues: HTH-type transcriptional regulator SarR (115 aa).

Residues 51 to 74 constitute a DNA-binding region (H-T-H motif); it reads SKEIAKCSEFKPYYLTKALQKLKD.

The protein belongs to the SarA family. Homodimer.

It is found in the cytoplasm. Negative regulator of sarA transcription at late exponential and stationary growth phases. It contributes to the modulation of target genes downstream of the sarA regulatory cascade. Also, positively regulates expression of primary transcripts RNAII and RNAIII generated by agr (virulence accessory gene regulator) locus. This is HTH-type transcriptional regulator SarR (sarR) from Staphylococcus aureus (strain NCTC 8325 / PS 47).